Consider the following 292-residue polypeptide: Homoserine kinase (292 aa).

84–94 contacts ATP; it reads PLARGMGSSSA.

This sequence belongs to the GHMP kinase family. Homoserine kinase subfamily.

It localises to the cytoplasm. The catalysed reaction is L-homoserine + ATP = O-phospho-L-homoserine + ADP + H(+). It functions in the pathway amino-acid biosynthesis; L-threonine biosynthesis; L-threonine from L-aspartate: step 4/5. In terms of biological role, catalyzes the ATP-dependent phosphorylation of L-homoserine to L-homoserine phosphate. This is Homoserine kinase from Thermus thermophilus (strain ATCC 27634 / DSM 579 / HB8).